The chain runs to 411 residues: DNA polymerase IV (411 aa).

The UmuC domain maps to 18 to 211 (VVHVDMDCFY…LDVADLHGVG (194 aa)). 2 residues coordinate Mg(2+): aspartate 22 and aspartate 130. Glutamate 131 is a catalytic residue. Disordered regions lie at residues 248-280 (FHRR…GATE) and 376-411 (GFSG…DEFT). Residues 253–274 (RGADSRPVEPRGKPKSLSRESS) show a composition bias toward basic and acidic residues. A compositionally biased stretch (gly residues) spans 384–402 (DGGGHEGGACGGAGRGSCG).

This sequence belongs to the DNA polymerase type-Y family. As to quaternary structure, monomer. Mg(2+) is required as a cofactor.

Its subcellular location is the cytoplasm. It catalyses the reaction DNA(n) + a 2'-deoxyribonucleoside 5'-triphosphate = DNA(n+1) + diphosphate. In terms of biological role, poorly processive, error-prone DNA polymerase involved in untargeted mutagenesis. Copies undamaged DNA at stalled replication forks, which arise in vivo from mismatched or misaligned primer ends. These misaligned primers can be extended by PolIV. Exhibits no 3'-5' exonuclease (proofreading) activity. May be involved in translesional synthesis. The sequence is that of DNA polymerase IV from Halobacterium salinarum (strain ATCC 29341 / DSM 671 / R1).